Consider the following 518-residue polypeptide: Flagellin (518 aa).

The protein belongs to the bacterial flagellin family.

The protein resides in the secreted. Its subcellular location is the bacterial flagellum. Flagellin is the subunit protein which polymerizes to form the filaments of bacterial flagella. This Aquifex aeolicus (strain VF5) protein is Flagellin (flaA).